Reading from the N-terminus, the 761-residue chain is MASNERDAISWYQKKIGAYDQQIWEKSIEQTQIKGFKNKPKKMGHIKPDLIDVDLIRGSTFAKAKPEIPWTSLTRKGLVRVVFFPLFSSWWIQVTSLRIFVWLLLLYLMQVTAVVLYLLMPIVSASEVLGPLCLMLLMGTVHCQIVSTQITRPSGNNGNRRRRKLRKTVNGDGSRDNGNNSPDKVRAVETLESASSVGGFWGTLFGNRIKRVKLVSNKGTETDNDSGCFHPILKKRQGRPEIRMWQAREKAKVSDGEKCRREAYRRLGNGISDDLSSEEDGEARTQMILLRRSVEGASSDNGYEVKNRRSILSRHLNSQVKKTTRWCHIVRDSDSLAESEFESAVFSQGSRSGMSGGSRSLNLSRRDSESTRHDSETEDMLWDDLLHGPECRSSVTSDSEGAHVNTIHSGTKRDPKEDVFQQNHLFWLQNSSPASERVSAIIWEGNECKKMDMSVLEISGIIMSRVNAYEQGVGYQMLGNAVTVGLALFPFLYRLFREKSFDQLKSISAEEVLTLFCGAPPVTPVVILSIINFIERLCLTWMFFFMMCVAERTYKQRFLFAKLFSHITSARKARKYEIPHFRLKKVENIKIWLSLRSYLKRRGPQRSVDVVVSSVFLLTLSIAFICCAQVLQGHKTFLNDAYNWEFLIWETALLLFLLRLASLGSETNKKYSNVSILLTEQINLYLKMEKKPNKKEQLTLVNNVLKLSTKLLKELDTPFRLYGLTMNPLIYNITRVVILSAVSGVISDLLGFNIRLWKIKS.

In terms of domain architecture, PHTF spans 6–150; sequence RDAISWYQKK…VHCQIVSTQI (145 aa). A run of 3 helical transmembrane segments spans residues 77-97, 99-119, and 121-141; these read GLVRVVFFPLFSSWWIQVTSL, IFVWLLLLYLMQVTAVVLYLL, and PIVSASEVLGPLCLMLLMGTV. The tract at residues 152-184 is disordered; the sequence is RPSGNNGNRRRRKLRKTVNGDGSRDNGNNSPDK. A compositionally biased stretch (low complexity) spans 170-181; the sequence is NGDGSRDNGNNS. Residues Asn-179 and Asn-224 are each glycosylated (N-linked (GlcNAc...) asparagine). Phosphoserine occurs at positions 272, 276, 277, 333, and 335. Residues 345 to 414 form a disordered region; it reads VFSQGSRSGM…NTIHSGTKRD (70 aa). Over residues 347–363 the composition is skewed to low complexity; it reads SQGSRSGMSGGSRSLNL. Asn-362 carries an N-linked (GlcNAc...) asparagine glycan. Positions 364–375 are enriched in basic and acidic residues; that stretch reads SRRDSESTRHDS. Residue Asn-430 is glycosylated (N-linked (GlcNAc...) asparagine). 4 consecutive transmembrane segments (helical) span residues 472–492, 514–534, 610–630, and 644–664; these read GVGYQMLGNAVTVGLALFPFL, TLFCGAPPVTPVVILSIINFI, VVVSSVFLLTLSIAFICCAQV, and WEFLIWETALLLFLLRLASLG. 2 N-linked (GlcNAc...) asparagine glycosylation sites follow: Asn-673 and Asn-732. The chain crosses the membrane as a helical span at residues 736–756; the sequence is VVILSAVSGVISDLLGFNIRL.

As to quaternary structure, interacts with FEM1B. Widely expressed with highest levels in testis.

Its subcellular location is the endoplasmic reticulum membrane. The protein localises to the golgi apparatus. It is found in the cis-Golgi network membrane. The sequence is that of Protein PHTF1 from Mus musculus (Mouse).